A 342-amino-acid chain; its full sequence is Farnesyl pyrophosphate synthase 1 (342 aa).

Isopentenyl diphosphate is bound by residues Lys-48, Arg-51, and Gln-86. Residues Asp-93 and Asp-97 each coordinate Mg(2+). Residue Arg-102 participates in dimethylallyl diphosphate binding. Arg-103 is an isopentenyl diphosphate binding site. The dimethylallyl diphosphate site is built by Lys-190, Thr-191, Gln-229, Lys-246, and Lys-255.

Belongs to the FPP/GGPP synthase family. Requires Mg(2+) as cofactor.

Its subcellular location is the cytoplasm. The catalysed reaction is isopentenyl diphosphate + dimethylallyl diphosphate = (2E)-geranyl diphosphate + diphosphate. It catalyses the reaction isopentenyl diphosphate + (2E)-geranyl diphosphate = (2E,6E)-farnesyl diphosphate + diphosphate. It participates in isoprenoid biosynthesis; farnesyl diphosphate biosynthesis; farnesyl diphosphate from geranyl diphosphate and isopentenyl diphosphate: step 1/1. The protein operates within isoprenoid biosynthesis; geranyl diphosphate biosynthesis; geranyl diphosphate from dimethylallyl diphosphate and isopentenyl diphosphate: step 1/1. Its function is as follows. Catalyzes the sequential condensation of isopentenyl pyrophosphate with the allylic pyrophosphates, dimethylallyl pyrophosphate, and then with the resultant geranylpyrophosphate to the ultimate product farnesyl pyrophosphate. This chain is Farnesyl pyrophosphate synthase 1 (FPS1), found in Parthenium argentatum (Guayule rubber plant).